The sequence spans 158 residues: Protein OPG060 (158 aa).

This sequence belongs to the orthopoxvirus OPG058 family.

The sequence is that of Protein OPG060 (OPG060) from Homo sapiens (Human).